We begin with the raw amino-acid sequence, 468 residues long: MVFAALDPLGVPLGTAQASFGTDGIRGRVGTLLTPAFILQVGYWCGQVLPDQGPVLIGMDSRSSGAMVASALTAGLTAAGREVWTLGLCPTPAVPGLIRKLGAAGGLMVSASHNPPEDNGIKVFGADGAKLSPAKQGLIEAGLRGEAIGDKGRPTITSCGPAYQRNELLSHYRDALLASVLHQRLDGVPIVLDLCWGAATACGAEVFAALGADLTVLHGEPDGRRINVGCGSTQLEPLRRAVIERGAIMGFAFDGDADRMLALDGHGRVVDGDHVLYLWGSDLQDRQALPQQRLVATVMSNLGFERAWQQRGGVLERTPVGDQHVYAAMVESNAALGGEQSGHILSAAHGLCGDGVLTALQLATLCHGRGLSLGEWLDQSFQAFPQKLVNVRVPDLERRMGWQHCEPLQEAVLAAEAAMGEDGRVLVRASGTEPLLRVMIEAADSAAVEFWTAQLADLAEQHLNRGCV.

The active-site Phosphoserine intermediate is the serine 112. Positions 112, 254, 256, and 258 each coordinate Mg(2+). Serine 112 is subject to Phosphoserine.

This sequence belongs to the phosphohexose mutase family. It depends on Mg(2+) as a cofactor. Post-translationally, activated by phosphorylation.

The enzyme catalyses alpha-D-glucosamine 1-phosphate = D-glucosamine 6-phosphate. In terms of biological role, catalyzes the conversion of glucosamine-6-phosphate to glucosamine-1-phosphate. In Prochlorococcus marinus (strain MIT 9313), this protein is Phosphoglucosamine mutase.